We begin with the raw amino-acid sequence, 419 residues long: Probable pectate lyase C (419 aa).

The signal sequence occupies residues 1–19 (MRLTPSLISCLSLLHFTSA). 3 N-linked (GlcNAc...) asparagine glycosylation sites follow: Asn-48, Asn-164, and Asn-201. Arg-204 is an active-site residue. Residues 261–296 (NENFHAYVETNYYDSDKDGTLNGSELGVDSTNYGGM) form the EF-hand domain. The Ca(2+) site is built by Asp-274, Asp-276, Asp-278, and Thr-280. Asn-282 carries an N-linked (GlcNAc...) asparagine glycan. Glu-285 lines the Ca(2+) pocket. Residues 352–395 (ISDEADMGGAGDLDQGTTPTDTDGDGIPDDAEAELGTDPNTADS) form a disordered region. The span at 363–372 (DLDQGTTPTD) shows a compositional bias: low complexity. The span at 373 to 386 (TDGDGIPDDAEAEL) shows a compositional bias: acidic residues.

Belongs to the polysaccharide lyase 1 family. Ca(2+) serves as cofactor.

Its subcellular location is the secreted. It carries out the reaction Eliminative cleavage of (1-&gt;4)-alpha-D-galacturonan to give oligosaccharides with 4-deoxy-alpha-D-galact-4-enuronosyl groups at their non-reducing ends.. Functionally, pectinolytic enzyme consist of four classes of enzymes: pectin lyase, polygalacturonase, pectin methylesterase and rhamnogalacturonase. Among pectinolytic enzymes, pectin lyase is the most important in depolymerization of pectin, since it cleaves internal glycosidic bonds of highly methylated pectins. Favors pectate, the anion, over pectin, the methyl ester. This chain is Probable pectate lyase C (plyC), found in Aspergillus oryzae (strain ATCC 42149 / RIB 40) (Yellow koji mold).